The chain runs to 566 residues: Cyclin-dependent kinase-like 2 (566 aa).

The Protein kinase domain maps to Tyr-4 to Phe-287. ATP-binding positions include Val-10 to Val-18 and Lys-33. The [NKR]KIAxRE signature appears at Lys-45–Glu-51. Residue Asp-126 is the Proton acceptor of the active site. Disordered stretches follow at residues Asp-307 to Arg-334 and Gln-545 to His-566. The span at Arg-320 to Arg-334 shows a compositional bias: basic and acidic residues.

Belongs to the protein kinase superfamily. CMGC Ser/Thr protein kinase family. CDC2/CDKX subfamily.

The protein localises to the cytoplasm. The protein resides in the nucleus. It catalyses the reaction L-seryl-[protein] + ATP = O-phospho-L-seryl-[protein] + ADP + H(+). It carries out the reaction L-threonyl-[protein] + ATP = O-phospho-L-threonyl-[protein] + ADP + H(+). The protein is Cyclin-dependent kinase-like 2 of Oryctolagus cuniculus (Rabbit).